The chain runs to 100 residues: Small ribosomal subunit protein uS14 (100 aa).

It belongs to the universal ribosomal protein uS14 family. As to quaternary structure, part of the 30S ribosomal subunit. Contacts proteins S3 and S10.

In terms of biological role, binds 16S rRNA, required for the assembly of 30S particles and may also be responsible for determining the conformation of the 16S rRNA at the A site. In Synechococcus sp. (strain CC9605), this protein is Small ribosomal subunit protein uS14.